Reading from the N-terminus, the 166-residue chain is Probable protein tyrosine phosphatase type IVA A (166 aa).

The Tyrosine-protein phosphatase domain maps to 10–164 (NPASLVESST…YKSKKKSSCR (155 aa)). The cysteines at positions 52 and 107 are disulfide-linked. Asp-75 functions as the Proton donor in the catalytic mechanism. Cys-107 (phosphocysteine intermediate) is an active-site residue. Residue 108–113 (VAGLGR) coordinates phosphate. Arg-113 lines the substrate pocket. Cysteine methyl ester is present on Cys-163. Cys-163 is lipidated: S-farnesyl cysteine. Positions 164–166 (RIM) are cleaved as a propeptide — removed in mature form.

This sequence belongs to the protein-tyrosine phosphatase family.

Its subcellular location is the membrane. It carries out the reaction O-phospho-L-tyrosyl-[protein] + H2O = L-tyrosyl-[protein] + phosphate. The chain is Probable protein tyrosine phosphatase type IVA A from Dictyostelium discoideum (Social amoeba).